The chain runs to 76 residues: Serine proteinase inhibitor IA-2 (76 aa).

Ser-1 is subject to N-acetylserine.

Belongs to the protease inhibitor I9 family.

Its function is as follows. Specifically inhibits an intracellular serine proteinase (proteinase A). The chain is Serine proteinase inhibitor IA-2 from Pleurotus ostreatus (Oyster mushroom).